A 311-amino-acid polypeptide reads, in one-letter code: Putative mitochondrial transporter UCP3 (311 aa).

The Mitochondrial intermembrane segment spans residues 1–10; the sequence is MVGLQPSERP. The chain crosses the membrane as a helical span at residues 11-32; it reads PTTSVKFLAAGTAACFADLLTF. 3 Solcar repeats span residues 11 to 105, 114 to 205, and 214 to 299; these read PTTS…VKQF, SSII…IKEK, and DNFP…MKRA. Residues 33-76 lie on the Mitochondrial matrix side of the membrane; sequence PLDTAKVRLQIQGENQAALAARSAQYRGVLGTILTMVRTEGPRS. Residues 77–99 form a helical membrane-spanning segment; it reads LYSGLVAGLQRQMSFASIRIGLY. Over 100–119 the chain is Mitochondrial intermembrane; the sequence is DSVKQFYTPKGSDHSSIITR. A helical transmembrane segment spans residues 120 to 136; that stretch reads ILAGCTTGAMAVTCAQP. Residues 137–182 are Mitochondrial matrix-facing; sequence TDVVKIRFQASMHTGLGGNRKYSGTMDAYRTIAREEGVRGLWKGIL. Residues 183–199 form a helical membrane-spanning segment; the sequence is PNITRNAIVNCGEMVTY. Over 200–216 the chain is Mitochondrial intermembrane; the sequence is DIIKEKLLDYHLLTDNF. Residues 217 to 236 traverse the membrane as a helical segment; the sequence is PCHFVSAFGAGFCATLVASP. Topologically, residues 237–270 are mitochondrial matrix; sequence VDVVKTRYMNSPPGQYHSPFDCMLKMVTQEGPTA. The chain crosses the membrane as a helical span at residues 271–293; it reads FYKGFTPSFLRLGSWNVVMFVTY. A purine nucleotide binding region spans residues 278–300; the sequence is SFLRLGSWNVVMFVTYEQMKRAL. At 294–311 the chain is on the mitochondrial intermembrane side; that stretch reads EQMKRALMKVQMLRDSPF.

It belongs to the mitochondrial carrier (TC 2.A.29) family. In terms of assembly, interacts with HAX1; the interaction is direct and calcium-dependent.

Its subcellular location is the mitochondrion inner membrane. Its function is as follows. Putative transmembrane transporter that plays a role in mitochondrial metabolism via an as yet unclear mechanism. Originally, this mitochondrial protein was thought to act as a proton transmembrane transporter from the mitochondrial intermembrane space into the matrix, causing proton leaks through the inner mitochondrial membrane, thereby uncoupling mitochondrial membrane potential generation from ATP synthesis. However, this function is controversial and uncoupling may not be the function, or at least not the main function, but rather a consequence of more conventional metabolite transporter activity. This chain is Putative mitochondrial transporter UCP3, found in Bos taurus (Bovine).